The primary structure comprises 672 residues: Segment polarity protein dishevelled homolog mig-5 (672 aa).

One can recognise a DIX domain in the interval 9-91 (CSQIKVFYYL…GFYEIFLVST (83 aa)). Disordered stretches follow at residues 97–127 (LPRN…ATPY), 150–174 (YTSN…SSLY), and 187–215 (DDDR…ATES). The span at 98–108 (PRNSGTMTRPQ) shows a compositional bias: polar residues. A compositionally biased stretch (basic and acidic residues) spans 160-169 (YDEHTRRTGD). Basic residues predominate over residues 191–202 (RRKKQKKERFRR). In terms of domain architecture, PDZ spans 226-294 (EIYLPMKNVP…PQAVRSLREA (69 aa)). The DEP domain occupies 427 to 501 (PDSGLAVKNR…TEKCYYVFGD (75 aa)). The disordered stretch occupies residues 604 to 672 (KNNHRQVPAP…SNSRTRILRT (69 aa)). Residues 660 to 672 (ENSSNSRTRILRT) are compositionally biased toward polar residues.

The protein belongs to the DSH family.

It localises to the cytoplasm. Its subcellular location is the cell cortex. It is found in the cell membrane. The protein resides in the cell junction. Plays a role in the signal transduction pathways mediated by multiple Wnt genes. Functions redundantly with other dishevelled family members throughout development. During embryonic and larval development, controls cell migration and/or cell fate specification of hypodermal cells, hypodermal seam cells, vulval precursor cells and, through distal tip cell migration, somatic gonad precursor cells. In early embryos, regulates the orientation of the mitotic spindle of blastomeres and specifically, along with dsh-2, is required for the correct mitotic spindle orientation of the ABar blastomere division plane. Controls the polarity and the asymmetric localization of downstream components of the wnt/beta-catenin asymmetry pathway, and in particular, controls the asymmetric localization of the wnt receptor lin-17/Frizzled in ectodermal blast B cells. May act redundantly with dsh-2 to regulate the expression and nuclear localization of the beta-catenin homolog wrm-2, but alone seems to be required for the polarity of wrm-2 during the asymmetric cell division of hypodermal seam cells. Also, maintains the polarity and migration of QL neuroblasts in larvae. During the embryonic development of touch receptor neurons, may act redundantly with dsh-1, downstream of wnt signaling ligands and the wnt receptor lin-17/Frizzled, to direct the growth of neurites of touch receptor neurons towards the anterior of the body of the worm and towards the PLM touch receptor neuron and other tail neurons. May play a role in the guidance of posterior D-type motor neuron axons along the anteroposterior axis. The sequence is that of Segment polarity protein dishevelled homolog mig-5 from Caenorhabditis elegans.